A 513-amino-acid chain; its full sequence is Histidine ammonia-lyase (513 aa).

Residues 145–147 (ASG) constitute a cross-link (5-imidazolinone (Ala-Gly)). Ser146 is modified (2,3-didehydroalanine (Ser)).

It belongs to the PAL/histidase family. Post-translationally, contains an active site 4-methylidene-imidazol-5-one (MIO), which is formed autocatalytically by cyclization and dehydration of residues Ala-Ser-Gly.

It localises to the cytoplasm. It carries out the reaction L-histidine = trans-urocanate + NH4(+). Its pathway is amino-acid degradation; L-histidine degradation into L-glutamate; N-formimidoyl-L-glutamate from L-histidine: step 1/3. This is Histidine ammonia-lyase from Vibrio vulnificus (strain CMCP6).